We begin with the raw amino-acid sequence, 829 residues long: Transmembrane protease serine 7 (829 aa).

Topologically, residues 1 to 62 (MDKEKSDPSC…RAPFWNVQNK (62 aa)) are cytoplasmic. Residues 26–52 (SVPGKLPGRRPPRKPIGKPRPRKQPKK) are disordered. Basic residues predominate over residues 32–52 (PGRRPPRKPIGKPRPRKQPKK). A helical; Signal-anchor for type II membrane protein transmembrane segment spans residues 63-83 (IILFTVFLFILAVTAWTLLWL). Over 84-829 (YISKTESKDA…WIHKYVPSLL (746 aa)) the chain is Extracellular. The 129-residue stretch at 92-220 (DAFYFVGMFR…DSVVLNAGLR (129 aa)) folds into the SEA domain. Cystine bridges form between cysteine 233–cysteine 259, cysteine 285–cysteine 308, and cysteine 351–cysteine 382. CUB domains lie at 233–346 (CSRY…FEVI) and 351–467 (CEST…YNIS). N-linked (GlcNAc...) asparagine glycans are attached at residues asparagine 401 and asparagine 465. LDL-receptor class A domains are found at residues 469–505 (PCPAGSFRCSSGLCVPQAQRCDGVNDCFDESDELFCV), 503–540 (FCVTVKPACNSSSFRQHGPLVCDGFRDCEDGQDEQNCT), and 544–581 (PCTSRTFKCGNDICFRKQNAQCDGIVDCPDGSDEEGCG). Cystine bridges form between cysteine 470/cysteine 482, cysteine 477/cysteine 495, cysteine 489/cysteine 504, cysteine 511/cysteine 530, cysteine 524/cysteine 539, cysteine 545/cysteine 557, cysteine 552/cysteine 571, cysteine 565/cysteine 580, and cysteine 617/cysteine 633. One can recognise a Peptidase S1 domain in the interval 592–826 (IVGGSDSQEG…FVPWIHKYVP (235 aa)). Active-site charge relay system residues include histidine 632 and aspartate 680. 3 disulfides stabilise this stretch: cysteine 716/cysteine 782, cysteine 748/cysteine 761, and cysteine 772/cysteine 802. The active-site Charge relay system is serine 776.

This sequence belongs to the peptidase S1 family. As to quaternary structure, forms a heterodimer with SERPINA5. Post-translationally, N-glycosylated. Expressed in brain, eye, testis, skin, epididymis and salivary gland with lower levels in heart, skeletal muscle, thymus, ovary, prostate and uterus.

It is found in the cell membrane. Its function is as follows. Serine protease which preferentially hydrolyzes peptides with Arg at the P1 position. The chain is Transmembrane protease serine 7 (Tmprss7) from Mus musculus (Mouse).